We begin with the raw amino-acid sequence, 519 residues long: Amphoterin-induced protein 2 (519 aa).

Positions 1–38 are cleaved as a signal peptide; the sequence is MSLRFHTLPTLPRAVKPGCRELLCLLVIAVMVSPSASG. The LRRNT domain maps to 39 to 67; it reads MCPTACICATDIVSCTNKNLSKVPGNLFR. The Extracellular portion of the chain corresponds to 39 to 397; it reads MCPTACICAT…RSHAHEAFNT (359 aa). 2 disulfides stabilise this stretch: Cys40–Cys46 and Cys44–Cys53. A glycan (N-linked (GlcNAc...) asparagine) is linked at Asn57. 6 LRR repeats span residues 68-89, 93-114, 117-138, 141-162, 165-186, and 192-213; these read LIKR…WIPV, KLST…SFST, NLKC…TFQE, ALEV…AFGG, HLQK…LYTG, and DLTF…HINL. Asn103 carries N-linked (GlcNAc...) asparagine glycosylation. Residues 227–283 form the LRRCT domain; it reads NPFVCDCSLYSLLIFWYRRHFSSVMDFKNDYTCRLWSDSRHSHQLQLLQESFLNCSY. Cystine bridges form between Cys231–Cys259 and Cys233–Cys281. N-linked (GlcNAc...) asparagine glycosylation is found at Asn280, Asn287, Asn344, Asn372, Asn380, Asn383, and Asn387. The Ig-like C2-type domain maps to 288–378; sequence GSFHALGFIH…RLLNETVDIM (91 aa). The cysteines at positions 309 and 362 are disulfide-linked. The helical transmembrane segment at 398–418 threads the bilayer; it reads AFTTLAACVASIVLVLLYLYL. Topologically, residues 419–519 are cytoplasmic; that stretch reads TPCPCKCKAK…FSDTPFVAST (101 aa). The disordered stretch occupies residues 498–519; the sequence is RAKSDSDSVNSVFSDTPFVAST.

Belongs to the immunoglobulin superfamily. AMIGO family. In terms of assembly, binds itself as well as AMIGO1 and AMIGO3. As to expression, highest level in cerebellum, retina, liver, and lung. Lower levels in cerebrum, kidney, small intestine, spleen and testis.

It localises to the cell membrane. The protein localises to the nucleus. Functionally, required for depolarization-dependent survival of cultured cerebellar granule neurons. May mediate homophilic as well as heterophilic cell-cell interaction with AMIGO1 or AMIGO3. May contribute to signal transduction through its intracellular domain. In Mus musculus (Mouse), this protein is Amphoterin-induced protein 2.